A 166-amino-acid chain; its full sequence is Putative 4-hydroxy-4-methyl-2-oxoglutarate aldolase 2 (166 aa).

N-acetylalanine is present on A2. Residues 81–84 (GGNP) and R103 contribute to the substrate site. D104 contributes to the a divalent metal cation binding site.

Belongs to the class II aldolase/RraA-like family. As to quaternary structure, homotrimer. A divalent metal cation serves as cofactor.

It catalyses the reaction 4-hydroxy-4-methyl-2-oxoglutarate = 2 pyruvate. The enzyme catalyses oxaloacetate + H(+) = pyruvate + CO2. Functionally, catalyzes the aldol cleavage of 4-hydroxy-4-methyl-2-oxoglutarate (HMG) into 2 molecules of pyruvate. Also contains a secondary oxaloacetate (OAA) decarboxylase activity due to the common pyruvate enolate transition state formed following C-C bond cleavage in the retro-aldol and decarboxylation reactions. The polypeptide is Putative 4-hydroxy-4-methyl-2-oxoglutarate aldolase 2 (Arabidopsis thaliana (Mouse-ear cress)).